The chain runs to 406 residues: WD repeat and SOCS box-containing protein 2 (406 aa).

A disordered region spans residues 70-89; the sequence is AKSRSSKNETKGRGSPKEKT. 5 WD repeats span residues 107–150, 153–193, 197–236, 239–278, and 293–332; these read PPSK…LLLN, GHQD…KQIQ, GHLQWVYCCSISPDCSMLCSAAGEKSVFLWSMRSYTLIRK, GHQSSVVSCDFSPDSALLVTASYDTNVIMWDPYTGERLRS, and VHISSLRSVCFSPEGLYLATVADDRLLRIWALELKTPIAF. The region spanning 358-406 is the SOCS box domain; it reads HVQFWTAPRVLSSLKHLCRKALRSFLTTYQVLALPIPKKMKEFLTYRTF.

Its pathway is protein modification; protein ubiquitination. Functionally, may be a substrate-recognition component of a SCF-like ECS (Elongin-Cullin-SOCS-box protein) E3 ubiquitin ligase complex which mediates the ubiquitination and subsequent proteasomal degradation of target proteins. The chain is WD repeat and SOCS box-containing protein 2 (WSB2) from Bos taurus (Bovine).